The primary structure comprises 508 residues: Probable monogalactosyldiacylglycerol synthase 3, chloroplastic (508 aa).

A chloroplast-targeting transit peptide spans 1–60 (MAASSSSSSSMASPRGRSIRETVLETVAAYHQQQRMRRKFRKSLSYAGELSSAGRARGEG). The segment at 51-79 (SSAGRARGEGGASSSASTTSLCGPDEDDE) is disordered.

The protein belongs to the glycosyltransferase 28 family.

It is found in the plastid. It localises to the chloroplast membrane. The catalysed reaction is a 1,2-diacyl-sn-glycerol + UDP-alpha-D-galactose = a 1,2-diacyl-3-O-(beta-D-galactosyl)-sn-glycerol + UDP + H(+). In terms of biological role, involved in the synthesis of the major structural component of photosynthetic membranes. In Oryza sativa subsp. japonica (Rice), this protein is Probable monogalactosyldiacylglycerol synthase 3, chloroplastic (MGD3).